The primary structure comprises 321 residues: NADPH-dependent codeinone reductase 1-4 (321 aa).

Residues threonine 27 and aspartate 51 each coordinate NADPH. Catalysis depends on proton donor residues tyrosine 56 and histidine 119. Residue histidine 119 participates in substrate binding. NADPH is bound by residues serine 165, glutamine 187, serine 214, leucine 216, serine 264, and arginine 269. The segment at 299–321 (SADFLLSPTGPFKTEEEFWDEKD) is disordered.

Belongs to the aldo/keto reductase family. Latex secreting cells (laticifer cells). Expressed constitutively in all organs with highest levels in capsules. Restricted to the parietal region of sieve elements adjacent or proximal to laticifers in roots, stems, leaves and carpels.

The protein resides in the cytoplasm. Its subcellular location is the cytosol. The enzyme catalyses codeine + NADP(+) = codeinone + NADPH + H(+). The catalysed reaction is neopine + NADP(+) = neopinone + NADPH + H(+). It catalyses the reaction morphine + NADP(+) = morphinone + NADPH + H(+). It carries out the reaction neomorphine + NADP(+) = neomorphinone + NADPH + H(+). It functions in the pathway alkaloid biosynthesis; morphine biosynthesis. In terms of biological role, NADPH-dependent codeinone reductase involved in biosynthesis of morphinan-type benzylisoquinoline and opiate alkaloids natural products. Reduces codeinone to codeine in the penultimate step in morphine biosynthesis. Can use morphinone, hydrocodone and hydromorphone as substrate during reductive reaction with NADPH as cofactor, and morphine and dihydrocodeine as substrate during oxidative reaction with NADP as cofactor. Converts morphinone to morphine, and neomorphinone to neomorphine. Reduces irreversibly neopinone, a spontaneous isomer of codeinone, to neopine; in planta, neopine levels are limited to low levels. The polypeptide is NADPH-dependent codeinone reductase 1-4 (Papaver somniferum (Opium poppy)).